Consider the following 361-residue polypeptide: Inhibin alpha chain (361 aa).

Positions 1 to 21 (MLPLLLPLQLLLLMVMKGGHG) are cleaved as a signal peptide. A propeptide spanning residues 22–64 (CQGPELDRELVLAKVRALVLDALGPPNASKDGGKPVAQRLTRR) is cleaved from the precursor. The segment at 45–82 (GPPNASKDGGKPVAQRLTRRHAHTGGSTRRSMENEDED) is disordered. N-linked (GlcNAc...) asparagine glycosylation is found at asparagine 48, asparagine 144, and asparagine 266. A propeptide spans 65 to 230 (HAHTGGSTRR…PPSVGERARR (166 aa)) (inhibin alpha N-terminal region). Cystine bridges form between cysteine 260–cysteine 323, cysteine 289–cysteine 358, and cysteine 293–cysteine 360.

It belongs to the TGF-beta family. Dimeric, linked by one or more disulfide bonds. Activin B is a dimer of alpha and beta-B. Inhibin A is a dimer of alpha and beta-A. Inhibin B is a dimer of alpha and beta-B. Interacts with TGFBR3L; this interaction regulates female fertility. In terms of processing, proteolytic processing yields a number of bioactive forms, consisting either solely of the mature alpha chain, of the most N-terminal propeptide linked through a disulfide bond to the mature alpha chain, or of the entire proprotein.

It localises to the secreted. In terms of biological role, inhibins and activins inhibit and activate, respectively, the secretion of follitropin by the pituitary gland. Inhibins/activins are involved in regulating a number of diverse functions such as hypothalamic and pituitary hormone secretion, gonadal hormone secretion, germ cell development and maturation, erythroid differentiation, insulin secretion, nerve cell survival, embryonic axial development or bone growth, depending on their subunit composition. Inhibins appear to oppose the functions of activins. Functionally, inhibin A is a dimer of alpha/INHA and beta-A/INHBA that functions as a feedback regulator in the hypothalamic-pituitary-gonadal (HPG) axis. Inhibits the secretion of FSH from the anterior pituitary gland by acting on pituitary gonadotrope cells. Antagonizes activin A by binding to the proteoglycan, betaglycan, and forming a stable complex with and, thereby, sequestering type II activin receptors while excluding type I receptor. Its function is as follows. Inhibin B is a dimer of alpha and beta-B that plays a crucial role in the regulation of the reproductive system by inhibiting the secretion of follicle-stimulating hormone (FSH) from the anterior pituitary gland. Thereby, maintains reproductive homeostasis in both males and females. Acts as a more potent suppressor of FSH release than inhibin A. Functions as competitive receptor antagonist binding activin type II receptors with high affinity in the presence of the TGF-beta type III coreceptor/TGFBR3L. The protein is Inhibin alpha chain (INHA) of Trichosurus vulpecula (Brush-tailed possum).